We begin with the raw amino-acid sequence, 794 residues long: Protein sel-1 homolog 1 (794 aa).

Residues 1–21 (MQVRVRLLLLLCAVLLGSAAA) form the signal peptide. The interval 22 to 737 (SSDEETNQDE…DLFTQLDMDQ (716 aa)) is interaction with ERLEC1, OS9 and SYVN1. The Lumenal segment spans residues 22–738 (SSDEETNQDE…LFTQLDMDQL (717 aa)). Residues 23–32 (SDEETNQDES) show a composition bias toward acidic residues. Disordered stretches follow at residues 23–46 (SDEETNQDESLDSKGALPTDGSVK) and 73–105 (QDEEESSKSQEEVSVTEDISFLDSPNPSSKTYE). One can recognise a Fibronectin type-II domain in the interval 122–170 (AHGEPCHFPFLFLDKEYDECTSDGREDGRLWCATTYDYKTDEKWGFCET). 2 disulfides stabilise this stretch: cysteine 127–cysteine 153 and cysteine 141–cysteine 168. Sel1-like repeat units lie at residues 183-218 (AEAIYQSGMKILNGSTRKNQKREAYRYLQKAAGMNH), 219-254 (TKALERVSYALLFGDYLTQNIQAAKEMFEKLTEEGS), 255-290 (PKGQTGLGFLYASGLGVNSSQAKALVYYTFGALGGN), 291-326 (LIAHMVLGYRYWAGIGVLQSCESALTHYRLVANHVA), 373-409 (VQAQVGLGQLHLHGGRGVEQNHQRAFDYFNLAANAGN), 410-446 (SHAMAFLGKMYSEGSDIVPQSNETALHYFKKAADMGN), 447-482 (PVGQSGLGMAYLYGRGVQVNYDLALKYFQKAAEQGW), 483-518 (VDGQLQLGSMYYNGIGVKRDYKQALKYFNLASQGGH), and 519-554 (ILAFYNLAQMHASGTGVMRSCHTAVELFKNVCERGR). Residues asparagine 195 and asparagine 217 are each glycosylated (N-linked (GlcNAc...) asparagine). N-linked (GlcNAc...) asparagine glycosylation occurs at asparagine 272. The important for homodimerization and oligomerization stretch occupies residues 352-537 (NSGMLEEDLI…MHASGTGVMR (186 aa)). The N-linked (GlcNAc...) asparagine glycan is linked to asparagine 431. Asparagine 608 is a glycosylation site (N-linked (GlcNAc...) asparagine). Sel1-like repeat units follow at residues 627–662 (TVARIKLGDYHFYGFGTDVDYETAFIHYRLASEQQH) and 664–699 (AQAMFNLGYMHEKGLGIKQDIHLAKRFYDMAAEASP). The tract at residues 643–723 (TDVDYETAFI…VVYFLQYIRE (81 aa)) is interaction with SYVN1. The tract at residues 738 to 794 (LLGPEWDLYLMTIIALLLGTVIAYRQRQHQDIPVPRPPGPRPAPPQQEGPPEQQPPQ) is mediates retention in the endoplasmic reticulum. A helical transmembrane segment spans residues 739-759 (LGPEWDLYLMTIIALLLGTVI). Over 760 to 794 (AYRQRQHQDIPVPRPPGPRPAPPQQEGPPEQQPPQ) the chain is Cytoplasmic. The disordered stretch occupies residues 767-794 (QDIPVPRPPGPRPAPPQQEGPPEQQPPQ). Pro residues predominate over residues 771-794 (VPRPPGPRPAPPQQEGPPEQQPPQ).

Belongs to the sel-1 family. Homodimer and homooligomer. May form a complex with ERLEC1, HSPA5, OS9, and SYVN1. Interacts with FOXRED2 and EDEM1. Interacts with LPL and LMF1; may stabilize the complex formed by LPL and LMF1 and thereby promote the export of LPL dimers. Component of the HRD1 complex, which comprises at least SYNV1/HRD1, DERL1/2, FAM8A1, HERPUD1/HERP, OS9, SEL1L and UBE2J1. SYNV1 assembles with SEL1L and FAM8A1 through its transmembrane domains, but interaction with its cytoplasmic domain is required to confer stability to FAM8A1 and enhance recruitment of HERPUD1. The interaction with SYNV1/HRD1 is direct. N-glycosylated.

Its subcellular location is the endoplasmic reticulum membrane. Functionally, plays a role in the endoplasmic reticulum quality control (ERQC) system also called ER-associated degradation (ERAD) involved in ubiquitin-dependent degradation of misfolded endoplasmic reticulum proteins. Enhances SYVN1 stability. Plays a role in LPL maturation and secretion. Required for normal differentiation of the pancreas epithelium, and for normal exocrine function and survival of pancreatic cells. May play a role in Notch signaling. The sequence is that of Protein sel-1 homolog 1 (Sel1l) from Rattus norvegicus (Rat).